Reading from the N-terminus, the 342-residue chain is Cyclin pch1 (342 aa).

The segment at 261-342 (LPIDQKNGSH…TDKEMETEAS (82 aa)) is disordered. A compositionally biased stretch (polar residues) spans 278 to 314 (TPSSLASVSTQATPQHQNSSGRTDSFHSLNTETPSKS). Position 300 is a phosphothreonine (T300). S302 carries the phosphoserine modification. Over residues 329–342 (KSSDTDKEMETEAS) the composition is skewed to basic and acidic residues.

It belongs to the cyclin family. Cyclin C subfamily. In terms of assembly, interacts with cdc2 protein kinase and with the N-terminal domain of cdk9.

The protein resides in the nucleus. In terms of biological role, essential for progression through the whole cell cycle. The chain is Cyclin pch1 (pch1) from Schizosaccharomyces pombe (strain 972 / ATCC 24843) (Fission yeast).